An 81-amino-acid chain; its full sequence is Translational regulator CsrA (81 aa).

A compositionally biased stretch (polar residues) spans 59–71 (SQMQHLEQGNFPT). Residues 59–81 (SQMQHLEQGNFPTSFDDDDFFNR) form a disordered region.

It belongs to the CsrA/RsmA family. As to quaternary structure, homodimer; the beta-strands of each monomer intercalate to form a hydrophobic core, while the alpha-helices form wings that extend away from the core.

The protein resides in the cytoplasm. Functionally, a key translational regulator that binds mRNA to regulate translation initiation and/or mRNA stability. Mediates global changes in gene expression, shifting from rapid growth to stress survival by linking envelope stress, the stringent response and the catabolite repression systems. Usually binds in the 5'-UTR; binding at or near the Shine-Dalgarno sequence prevents ribosome-binding, repressing translation, binding elsewhere in the 5'-UTR can activate translation and/or stabilize the mRNA. Its function is antagonized by small RNA(s). The chain is Translational regulator CsrA from Psychrobacter sp. (strain PRwf-1).